The chain runs to 734 residues: 1,4-alpha-glucan branching enzyme GlgB (734 aa).

Asp414 serves as the catalytic Nucleophile. Residue Glu467 is the Proton donor of the active site.

The protein belongs to the glycosyl hydrolase 13 family. GlgB subfamily. In terms of assembly, monomer.

The catalysed reaction is Transfers a segment of a (1-&gt;4)-alpha-D-glucan chain to a primary hydroxy group in a similar glucan chain.. It participates in glycan biosynthesis; glycogen biosynthesis. Functionally, catalyzes the formation of the alpha-1,6-glucosidic linkages in glycogen by scission of a 1,4-alpha-linked oligosaccharide from growing alpha-1,4-glucan chains and the subsequent attachment of the oligosaccharide to the alpha-1,6 position. The chain is 1,4-alpha-glucan branching enzyme GlgB from Myxococcus xanthus (strain DK1622).